Consider the following 102-residue polypeptide: Phosphoribosyl-ATP pyrophosphatase (102 aa).

This sequence belongs to the PRA-PH family.

The protein localises to the cytoplasm. The enzyme catalyses 1-(5-phospho-beta-D-ribosyl)-ATP + H2O = 1-(5-phospho-beta-D-ribosyl)-5'-AMP + diphosphate + H(+). It participates in amino-acid biosynthesis; L-histidine biosynthesis; L-histidine from 5-phospho-alpha-D-ribose 1-diphosphate: step 2/9. In Jannaschia sp. (strain CCS1), this protein is Phosphoribosyl-ATP pyrophosphatase.